Reading from the N-terminus, the 223-residue chain is DnaJ homolog subfamily B member 9 (223 aa).

Residues 1 to 23 form the signal peptide; it reads MATPQSIFIFAICILMITELILA. Residues 26 to 90 enclose the J domain; that stretch reads SYYDILGVPK…NRRKEYDTLG (65 aa). A divergent targeting domain region spans residues 91-223; that stretch reads HSAFTSGKGQ…VTTYTDCSGQ (133 aa). Ser133 carries the post-translational modification Phosphoserine.

As to quaternary structure, interacts with HSPA5/BiP; interaction is direct. Interacts with ERN1/IRE1 (via the luminal region). Interacts with DERL1. Widely expressed. Expressed at highest level in the liver, placenta and kidney.

The protein localises to the endoplasmic reticulum lumen. Functionally, co-chaperone for Hsp70 protein HSPA5/BiP that acts as a key repressor of the ERN1/IRE1-mediated unfolded protein response (UPR). J domain-containing co-chaperones stimulate the ATPase activity of Hsp70 proteins and are required for efficient substrate recognition by Hsp70 proteins. In the unstressed endoplasmic reticulum, interacts with the luminal region of ERN1/IRE1 and selectively recruits HSPA5/BiP: HSPA5/BiP disrupts the dimerization of the active ERN1/IRE1 luminal region, thereby inactivating ERN1/IRE1. Also involved in endoplasmic reticulum-associated degradation (ERAD) of misfolded proteins. Required for survival of B-cell progenitors and normal antibody production. The polypeptide is DnaJ homolog subfamily B member 9 (DNAJB9) (Homo sapiens (Human)).